A 115-amino-acid polypeptide reads, in one-letter code: Ribonuclease P protein component 4 (115 aa).

Zn(2+) is bound by residues Cys-66, Cys-69, Cys-96, and Cys-99.

This sequence belongs to the eukaryotic/archaeal RNase P protein component 4 family. In terms of assembly, consists of a catalytic RNA component and at least 4-5 protein subunits. The cofactor is Zn(2+).

The protein localises to the cytoplasm. The enzyme catalyses Endonucleolytic cleavage of RNA, removing 5'-extranucleotides from tRNA precursor.. Part of ribonuclease P, a protein complex that generates mature tRNA molecules by cleaving their 5'-ends. The sequence is that of Ribonuclease P protein component 4 from Hyperthermus butylicus (strain DSM 5456 / JCM 9403 / PLM1-5).